The chain runs to 192 residues: MAEPLLVVGLGNPGPNYAKTRHNVGFVVADLLAGRIGSGFKAHRKSGADIATGRLAGRAVVLAKPRTYMNESGRNVGPLAKFYSVAPADVIVIHDELDIDFGRIRLKFGGGVAGHNGLKSVAAALGTKDFQRVRVGVGRPPGRKDAATYVLEPFTSVERPEVPTICEQAADATELLIAQGLEPAQNLVHAWA.

Tyrosine 17 contacts tRNA. The Proton acceptor role is filled by histidine 22. TRNA-binding residues include tyrosine 68, asparagine 70, and asparagine 116.

Belongs to the PTH family. Monomer.

It is found in the cytoplasm. It catalyses the reaction an N-acyl-L-alpha-aminoacyl-tRNA + H2O = an N-acyl-L-amino acid + a tRNA + H(+). In terms of biological role, hydrolyzes ribosome-free peptidyl-tRNAs (with 1 or more amino acids incorporated), which drop off the ribosome during protein synthesis, or as a result of ribosome stalling. Its function is as follows. Catalyzes the release of premature peptidyl moieties from peptidyl-tRNA molecules trapped in stalled 50S ribosomal subunits, and thus maintains levels of free tRNAs and 50S ribosomes. The chain is Peptidyl-tRNA hydrolase from Mycobacterium sp. (strain JLS).